Reading from the N-terminus, the 418-residue chain is Putative competence-damage inducible protein (418 aa).

This sequence belongs to the CinA family.

The chain is Putative competence-damage inducible protein from Streptococcus pneumoniae (strain JJA).